Here is a 627-residue protein sequence, read N- to C-terminus: (+)-3-carene synthase 1, chloroplastic (627 aa).

The transit peptide at 1 to 36 (MSVISIVPLASKPCLYKSFISSTHEPKALRRPISTV) directs the protein to the chloroplast. 3 residues coordinate Mg(2+): Asp378, Asp382, and Asp530. The DDXXD motif motif lies at 378–382 (DDMYD).

It belongs to the terpene synthase family. Tpsd subfamily. Mg(2+) serves as cofactor. Requires Mn(2+) as cofactor.

The protein localises to the plastid. Its subcellular location is the chloroplast. It catalyses the reaction (2E)-geranyl diphosphate = (+)-car-3-ene + diphosphate. It participates in terpene metabolism; oleoresin biosynthesis. Its function is as follows. Terpene synthase (TPS) involved in the biosynthesis of monoterpene natural products included in conifer oleoresin secretions and volatile emissions; these compounds contribute to biotic and abiotic stress defense against herbivores (e.g. insect attack by white pine weevil P.strobi) and pathogens. Catalyzes the conversion of (2E)-geranyl diphosphate (GPP) to (+)-car-3-ene. The chain is (+)-3-carene synthase 1, chloroplastic from Picea sitchensis (Sitka spruce).